The following is a 150-amino-acid chain: Protein-export protein SecB (150 aa).

Belongs to the SecB family. In terms of assembly, homotetramer, a dimer of dimers. One homotetramer interacts with 1 SecA dimer.

It is found in the cytoplasm. Its function is as follows. One of the proteins required for the normal export of preproteins out of the cell cytoplasm. It is a molecular chaperone that binds to a subset of precursor proteins, maintaining them in a translocation-competent state. It also specifically binds to its receptor SecA. The polypeptide is Protein-export protein SecB (Polaromonas sp. (strain JS666 / ATCC BAA-500)).